A 424-amino-acid polypeptide reads, in one-letter code: Serine hydroxymethyltransferase 2 (424 aa).

(6S)-5,6,7,8-tetrahydrofolate contacts are provided by residues Leu-125 and 129–131; that span reads GHL. At Lys-234 the chain carries N6-(pyridoxal phosphate)lysine. Residue Glu-250 participates in (6S)-5,6,7,8-tetrahydrofolate binding.

The protein belongs to the SHMT family. In terms of assembly, homodimer. It depends on pyridoxal 5'-phosphate as a cofactor.

The protein localises to the cytoplasm. It carries out the reaction (6R)-5,10-methylene-5,6,7,8-tetrahydrofolate + glycine + H2O = (6S)-5,6,7,8-tetrahydrofolate + L-serine. It participates in one-carbon metabolism; tetrahydrofolate interconversion. Its pathway is amino-acid biosynthesis; glycine biosynthesis; glycine from L-serine: step 1/1. In terms of biological role, catalyzes the reversible interconversion of serine and glycine with tetrahydrofolate (THF) serving as the one-carbon carrier. This reaction serves as the major source of one-carbon groups required for the biosynthesis of purines, thymidylate, methionine, and other important biomolecules. Also exhibits THF-independent aldolase activity toward beta-hydroxyamino acids, producing glycine and aldehydes, via a retro-aldol mechanism. The polypeptide is Serine hydroxymethyltransferase 2 (Ralstonia nicotianae (strain ATCC BAA-1114 / GMI1000) (Ralstonia solanacearum)).